A 138-amino-acid chain; its full sequence is NADH dehydrogenase [ubiquinone] 1 alpha subcomplex subunit N7BM (138 aa).

Belongs to the complex I NDUFA12 subunit family. In terms of assembly, complex I is composed of 42 different subunits.

It is found in the mitochondrion inner membrane. Accessory subunit of the mitochondrial membrane respiratory chain NADH dehydrogenase (Complex I), that is believed not to be involved in catalysis. Complex I functions in the transfer of electrons from NADH to the respiratory chain. The immediate electron acceptor for the enzyme is believed to be ubiquinone. This is NADH dehydrogenase [ubiquinone] 1 alpha subcomplex subunit N7BM from Yarrowia lipolytica (strain CLIB 122 / E 150) (Yeast).